A 372-amino-acid polypeptide reads, in one-letter code: L-lysine 4-hydroxylase (372 aa).

Fe cation-binding residues include histidine 176, glutamate 178, and histidine 312.

It belongs to the clavaminate synthase family. Requires Fe(2+) as cofactor.

It catalyses the reaction L-lysine + 2-oxoglutarate + O2 = (4R)-4-hydroxy-L-lysine + succinate + CO2. Alpha-ketoglutarate-dependent dioxygenase that in vitro catalyzes the regio- and stereoselective hydroxylation of L-lysine, leading to (4R)-4-hydroxy-L-lysine. This Flavobacterium sp. (strain CF136) protein is L-lysine 4-hydroxylase.